Here is a 96-residue protein sequence, read N- to C-terminus: ATP-dependent Clp protease adapter protein ClpS (96 aa).

The protein belongs to the ClpS family. Binds to the N-terminal domain of the chaperone ClpA.

Involved in the modulation of the specificity of the ClpAP-mediated ATP-dependent protein degradation. This Campylobacter jejuni subsp. jejuni serotype O:2 (strain ATCC 700819 / NCTC 11168) protein is ATP-dependent Clp protease adapter protein ClpS.